A 252-amino-acid polypeptide reads, in one-letter code: MLAKRIIPCLDIKDGRVVKGINFVDLKDAGDPVENAIVYEEQKADEIVFLDITASYEKRNTVIDLAKRVAQNIFTPFTIGGGIRTLDDIRKLLEAGADKVSINSAAVKNPQLIYESARKFGSQCIVVAIDAKHVEDDTWHVYINGGRLNTNLDAVEWAKQVESLGAGEILLTSIDKDGTKSGYDIKLTDLISKAVNIPVIASGGAGRKEHFLEAFKLTEASACLAASIFHFKKISIPALKAYLKENNVHVRI.

Residues aspartate 11 and aspartate 130 contribute to the active site.

The protein belongs to the HisA/HisF family. In terms of assembly, heterodimer of HisH and HisF.

The protein localises to the cytoplasm. It carries out the reaction 5-[(5-phospho-1-deoxy-D-ribulos-1-ylimino)methylamino]-1-(5-phospho-beta-D-ribosyl)imidazole-4-carboxamide + L-glutamine = D-erythro-1-(imidazol-4-yl)glycerol 3-phosphate + 5-amino-1-(5-phospho-beta-D-ribosyl)imidazole-4-carboxamide + L-glutamate + H(+). It participates in amino-acid biosynthesis; L-histidine biosynthesis; L-histidine from 5-phospho-alpha-D-ribose 1-diphosphate: step 5/9. In terms of biological role, IGPS catalyzes the conversion of PRFAR and glutamine to IGP, AICAR and glutamate. The HisF subunit catalyzes the cyclization activity that produces IGP and AICAR from PRFAR using the ammonia provided by the HisH subunit. This is Imidazole glycerol phosphate synthase subunit HisF from Hydrogenobaculum sp. (strain Y04AAS1).